Reading from the N-terminus, the 226-residue chain is MSNGSIPVDEVIEHLRNWNFTWNIILTILLVVLQYGHYKYSVFLYGVKMAILWILWPLVLALSLFDAWASFQVNWVFFAFSILMACITLMLWIMYFVNSIRLWRRTHSWWSFNPETDALLTTSVMGRQVCIPVLGAPTGVTLTLLSGTLLVEGYKVATGVQVSQLPNFVTVAKATTTIVYGRVGRSVNASSGTGWAFYVRSKHGDYSAVSNPSAVLTDSEKVPHLV.

Over 1–11 (MSNGSIPVDEV) the chain is Virion surface. The helical transmembrane segment at 12-32 (IEHLRNWNFTWNIILTILLVV) threads the bilayer. Over 33–41 (LQYGHYKYS) the chain is Intravirion. A helical membrane pass occupies residues 42 to 62 (VFLYGVKMAILWILWPLVLAL). Topologically, residues 63-75 (SLFDAWASFQVNW) are virion surface. A helical membrane pass occupies residues 76 to 96 (VFFAFSILMACITLMLWIMYF). Residues 97–226 (VNSIRLWRRT…TDSEKVPHLV (130 aa)) lie on the Intravirion side of the membrane. The segment at 200 to 216 (RSKHGDYSAVSNPSAVL) is interaction with N protein.

Belongs to the alphacoronaviruses M protein family. Homomultimer. Interacts with envelope E protein in the budding compartment of the host cell, which is located between endoplasmic reticulum and the Golgi complex. Forms a complex with HE and S proteins. Interacts with nucleocapsid N protein. This interaction probably participates in RNA packaging into the virus.

Its subcellular location is the virion membrane. It is found in the host Golgi apparatus membrane. In terms of biological role, component of the viral envelope that plays a central role in virus morphogenesis and assembly via its interactions with other viral proteins. The chain is Membrane protein from Sus scrofa (Pig).